The chain runs to 427 residues: Trigger factor (427 aa).

Residues 163-248 (GDTVVIDFVG…VHEVKSKEVP (86 aa)) enclose the PPIase FKBP-type domain.

This sequence belongs to the FKBP-type PPIase family. Tig subfamily.

The protein resides in the cytoplasm. It catalyses the reaction [protein]-peptidylproline (omega=180) = [protein]-peptidylproline (omega=0). Functionally, involved in protein export. Acts as a chaperone by maintaining the newly synthesized protein in an open conformation. Functions as a peptidyl-prolyl cis-trans isomerase. The polypeptide is Trigger factor (Streptococcus uberis (strain ATCC BAA-854 / 0140J)).